A 371-amino-acid polypeptide reads, in one-letter code: Chorismate synthase (371 aa).

The NADP(+) site is built by Arg-48 and Arg-54. FMN-binding positions include 131–133 (RSS), 245–246 (NA), Gly-290, 305–309 (KPTSS), and Arg-331.

The protein belongs to the chorismate synthase family. In terms of assembly, homotetramer. The cofactor is FMNH2.

The catalysed reaction is 5-O-(1-carboxyvinyl)-3-phosphoshikimate = chorismate + phosphate. The protein operates within metabolic intermediate biosynthesis; chorismate biosynthesis; chorismate from D-erythrose 4-phosphate and phosphoenolpyruvate: step 7/7. Functionally, catalyzes the anti-1,4-elimination of the C-3 phosphate and the C-6 proR hydrogen from 5-enolpyruvylshikimate-3-phosphate (EPSP) to yield chorismate, which is the branch point compound that serves as the starting substrate for the three terminal pathways of aromatic amino acid biosynthesis. This reaction introduces a second double bond into the aromatic ring system. The sequence is that of Chorismate synthase from Mesorhizobium japonicum (strain LMG 29417 / CECT 9101 / MAFF 303099) (Mesorhizobium loti (strain MAFF 303099)).